Reading from the N-terminus, the 158-residue chain is Glutathione peroxidase homolog BsaA (158 aa).

Residue C36 is part of the active site.

It belongs to the glutathione peroxidase family.

The protein is Glutathione peroxidase homolog BsaA (bsaA) of Staphylococcus epidermidis (strain ATCC 12228 / FDA PCI 1200).